Reading from the N-terminus, the 249-residue chain is MGIKYQKIGDVVIVKKELSEDEIREIVKRTKCKAILLYTTQITGEFRTPHVKILYGKETETIHKEYGCLFKLDVAKIMWSQGNIEERKRMAFISNENEVVVDMFAGIGYFTIPLAKYSKPKLVYAIEKNPTAYHYLCENIKLNKLNNVIPILADNRDVELKDVADRVIMGYVHKTHKFLDKTFEFLKDRGVIHYHETVAEKIMYERPIERLKFYAEKNGYKLIDYEVRKIKKYAPGVWHVVVDAKFERI.

Residues Ser80, Arg87, Glu127, and 154–155 contribute to the S-adenosyl-L-methionine site; that span reads DN.

This sequence belongs to the class I-like SAM-binding methyltransferase superfamily. TRM5/TYW2 family.

Its subcellular location is the cytoplasm. The catalysed reaction is 4-demethylwyosine(37) in tRNA(Phe) + S-adenosyl-L-methionine = 4-demethyl-7-[(3S)-3-amino-3-carboxypropyl]wyosine(37) in tRNA(Phe) + S-methyl-5'-thioadenosine + H(+). S-adenosyl-L-methionine-dependent transferase that acts as a component of the wyosine derivatives biosynthesis pathway. Catalyzes the transfer of the alpha-amino-alpha-carboxypropyl (acp) group from S-adenosyl-L-methionine to 4-demethylwyosine (imG-14), forming 7-aminocarboxypropyl-demethylwyosine (wybutosine-86) at position 37 of tRNA(Phe). The protein is tRNA(Phe) (4-demethylwyosine(37)-C(7)) aminocarboxypropyltransferase of Methanocaldococcus jannaschii (strain ATCC 43067 / DSM 2661 / JAL-1 / JCM 10045 / NBRC 100440) (Methanococcus jannaschii).